The sequence spans 503 residues: ATP synthase subunit alpha, chloroplastic (503 aa).

170–177 is a binding site for ATP; it reads GDRQTGKT.

It belongs to the ATPase alpha/beta chains family. As to quaternary structure, F-type ATPases have 2 components, CF(1) - the catalytic core - and CF(0) - the membrane proton channel. CF(1) has five subunits: alpha(3), beta(3), gamma(1), delta(1), epsilon(1). CF(0) has four main subunits: a, b, b' and c.

It is found in the plastid. Its subcellular location is the chloroplast thylakoid membrane. The enzyme catalyses ATP + H2O + 4 H(+)(in) = ADP + phosphate + 5 H(+)(out). In terms of biological role, produces ATP from ADP in the presence of a proton gradient across the membrane. The alpha chain is a regulatory subunit. The chain is ATP synthase subunit alpha, chloroplastic from Gracilaria tenuistipitata var. liui (Red alga).